A 138-amino-acid polypeptide reads, in one-letter code: Transcriptional regulator MraZ (138 aa).

SpoVT-AbrB domains follow at residues E3–E45 and A74–R117.

It belongs to the MraZ family. In terms of assembly, forms oligomers.

The protein localises to the cytoplasm. It is found in the nucleoid. This is Transcriptional regulator MraZ from Symbiobacterium thermophilum (strain DSM 24528 / JCM 14929 / IAM 14863 / T).